Here is a 296-residue protein sequence, read N- to C-terminus: Cell surface glycoprotein CD200 receptor 3 (296 aa).

The signal sequence occupies residues 1 to 25 (MHALGRTLALMLLIFITILVPESSC). Over 26 to 245 (SVKGREEIPP…NRGTTSILPS (220 aa)) the chain is Extracellular. In terms of domain architecture, Ig-like V-type spans 48 to 162 (PDGVGVTMEI…GIFQERHSIQ (115 aa)). Cysteines 75 and 146 form a disulfide. The Ig-like C2-type domain maps to 151 to 232 (TDGIFQERHS…SHLTDNWILS (82 aa)). N-linked (GlcNAc...) asparagine glycosylation is found at asparagine 167 and asparagine 199. A disulfide bond links cysteine 172 and cysteine 220. Residues 246–266 (LLSILYVKLAVTVLIVGFAFF) traverse the membrane as a helical segment. At 267–296 (QKRNYFSSRDLVFMKERRSKRSVWQREALG) the chain is on the cytoplasmic side.

This sequence belongs to the CD200R family. As to quaternary structure, isoform 3 interacts with TYROBP. Isoform 8 does not interact with TYROBP. In terms of tissue distribution, expressed in uterus and bone marrow-derived mast cells (at protein level). Expressed in uterus, spleen, bone marrow-derived dendritic, basophil and mast cells. Expressed in the lung of N.brasiliensis-infected mice. Weakly expressed in brain, testis, lung and thymus.

The protein localises to the membrane. Its function is as follows. According to PubMed:15187158 isoform 4 is a receptor for the CD200 cell surface glycoprotein. According to PubMed:16081818 isoform 4 is not a receptor for the CD200/OX2 cell surface glycoprotein. Isoform 1, isoform 2 and isoform 3 are involved in the recruitment or surface expression of the TYROBP receptor. Isoform 6, isoform 7 and isoform 8 are not involved in the recruitment or surface expression of the TYROBP receptor. The polypeptide is Cell surface glycoprotein CD200 receptor 3 (Cd200r3) (Mus musculus (Mouse)).